We begin with the raw amino-acid sequence, 264 residues long: MKIKVGVIGCSGRMGKRILNELITNTQVEIAGAVARLGSKYIGSDIGSAVYHSSNLGIKVTSSISDVFESSDVVIDFTTKECMLACLKAAMKFKTPLVSGTTGIESINLKKYAAKIPILWSANMSVGVNVLLKLVKKAAEFLDNEYDVEIWEMHHNLKKDSPSGTAMEFGKAIANALKVDFQPYQHSHNSSNIREKGKIGFAVSRGGGVVGDHSVMFINSDERIELNHKAIDRTTFARGAVRAAIWLYENKRETPGLYSMQDVI.

Residue 9 to 14 participates in NAD(+) binding; sequence GCSGRM. Arginine 36 is a binding site for NADP(+). NAD(+) is bound by residues 100-102 and 121-124; these read GTT and SANM. The active-site Proton donor/acceptor is histidine 154. Histidine 155 serves as a coordination point for (S)-2,3,4,5-tetrahydrodipicolinate. Residue lysine 158 is the Proton donor of the active site. 164–165 serves as a coordination point for (S)-2,3,4,5-tetrahydrodipicolinate; sequence GT.

It belongs to the DapB family.

The protein localises to the cytoplasm. The enzyme catalyses (S)-2,3,4,5-tetrahydrodipicolinate + NAD(+) + H2O = (2S,4S)-4-hydroxy-2,3,4,5-tetrahydrodipicolinate + NADH + H(+). It carries out the reaction (S)-2,3,4,5-tetrahydrodipicolinate + NADP(+) + H2O = (2S,4S)-4-hydroxy-2,3,4,5-tetrahydrodipicolinate + NADPH + H(+). It participates in amino-acid biosynthesis; L-lysine biosynthesis via DAP pathway; (S)-tetrahydrodipicolinate from L-aspartate: step 4/4. In terms of biological role, catalyzes the conversion of 4-hydroxy-tetrahydrodipicolinate (HTPA) to tetrahydrodipicolinate. In Wolbachia sp. subsp. Brugia malayi (strain TRS), this protein is 4-hydroxy-tetrahydrodipicolinate reductase.